Consider the following 427-residue polypeptide: Enolase (427 aa).

Gln-162 is a (2R)-2-phosphoglycerate binding site. The active-site Proton donor is the Glu-204. Mg(2+) is bound by residues Asp-241, Glu-282, and Asp-309. 4 residues coordinate (2R)-2-phosphoglycerate: Lys-334, Arg-363, Ser-364, and Lys-385. Lys-334 serves as the catalytic Proton acceptor.

The protein belongs to the enolase family. The cofactor is Mg(2+).

It is found in the cytoplasm. Its subcellular location is the secreted. It localises to the cell surface. It carries out the reaction (2R)-2-phosphoglycerate = phosphoenolpyruvate + H2O. The protein operates within carbohydrate degradation; glycolysis; pyruvate from D-glyceraldehyde 3-phosphate: step 4/5. Functionally, catalyzes the reversible conversion of 2-phosphoglycerate (2-PG) into phosphoenolpyruvate (PEP). It is essential for the degradation of carbohydrates via glycolysis. In Parafrankia sp. (strain EAN1pec), this protein is Enolase.